A 209-amino-acid polypeptide reads, in one-letter code: Orotate phosphoribosyltransferase (209 aa).

5-phospho-alpha-D-ribose 1-diphosphate-binding positions include R96, K100, H102, and 122–130 (EDLISTGGS). S126 lines the orotate pocket.

The protein belongs to the purine/pyrimidine phosphoribosyltransferase family. PyrE subfamily. Homodimer. Requires Mg(2+) as cofactor.

It catalyses the reaction orotidine 5'-phosphate + diphosphate = orotate + 5-phospho-alpha-D-ribose 1-diphosphate. Its pathway is pyrimidine metabolism; UMP biosynthesis via de novo pathway; UMP from orotate: step 1/2. Functionally, catalyzes the transfer of a ribosyl phosphate group from 5-phosphoribose 1-diphosphate to orotate, leading to the formation of orotidine monophosphate (OMP). The chain is Orotate phosphoribosyltransferase from Lactococcus lactis subsp. cremoris (strain SK11).